Consider the following 277-residue polypeptide: Putative gamma-glutamylcyclotransferase YkqA (277 aa).

Substrate is bound at residue 8–11; that stretch reads YGTL. The active-site Proton acceptor is E205.

The protein belongs to the gamma-glutamylcyclotransferase family.

Functionally, putative gamma-glutamylcyclotransferase. This Bacillus subtilis (strain 168) protein is Putative gamma-glutamylcyclotransferase YkqA (ykqA).